Here is a 367-residue protein sequence, read N- to C-terminus: Leucine-rich repeat-containing protein 28 (367 aa).

LRR repeat units follow at residues 16–36, 42–63, 66–87, 89–111, 112–133, 135–156, 158–180, 181–202, and 204–226; these read KHKNLFLNYRNLHHFPLELLK, HLERLYMKRNSLTTLPENLAQK, NLVELYLHSNNIVVVPEAIGSL, KLQCLDLSDNALEIVCPEIGGLR, ALRHLRLANNQLQFLPPEVGDL, ELQTLDISSNRLLALPERLHLC, SLQYLTVDRNRLCCVPRHLCQLP, SLNELSMAGNHLASLPIDLGRS, and ELQYVYVDNNIQLKGLPSYLYNK.

This chain is Leucine-rich repeat-containing protein 28 (Lrrc28), found in Mus musculus (Mouse).